We begin with the raw amino-acid sequence, 130 residues long: Small ribosomal subunit protein uS11 (130 aa).

Belongs to the universal ribosomal protein uS11 family. In terms of assembly, part of the 30S ribosomal subunit. Interacts with proteins S7 and S18. Binds to IF-3.

Located on the platform of the 30S subunit, it bridges several disparate RNA helices of the 16S rRNA. Forms part of the Shine-Dalgarno cleft in the 70S ribosome. This is Small ribosomal subunit protein uS11 from Xanthomonas campestris pv. campestris (strain B100).